The primary structure comprises 426 residues: Serine--tRNA ligase (426 aa).

L-serine is bound at residue T233 to E235. R264–E266 is an ATP binding site. E287 contacts L-serine. E351–S354 contacts ATP. S387 contributes to the L-serine binding site.

This sequence belongs to the class-II aminoacyl-tRNA synthetase family. Type-1 seryl-tRNA synthetase subfamily. In terms of assembly, homodimer. The tRNA molecule binds across the dimer.

The protein resides in the cytoplasm. The catalysed reaction is tRNA(Ser) + L-serine + ATP = L-seryl-tRNA(Ser) + AMP + diphosphate + H(+). It carries out the reaction tRNA(Sec) + L-serine + ATP = L-seryl-tRNA(Sec) + AMP + diphosphate + H(+). Its pathway is aminoacyl-tRNA biosynthesis; selenocysteinyl-tRNA(Sec) biosynthesis; L-seryl-tRNA(Sec) from L-serine and tRNA(Sec): step 1/1. In terms of biological role, catalyzes the attachment of serine to tRNA(Ser). Is also able to aminoacylate tRNA(Sec) with serine, to form the misacylated tRNA L-seryl-tRNA(Sec), which will be further converted into selenocysteinyl-tRNA(Sec). The chain is Serine--tRNA ligase from Clostridium tetani (strain Massachusetts / E88).